The chain runs to 353 residues: DNA-repair protein XRCC1 (353 aa).

Residues M1–S12 show a composition bias toward polar residues. The interval M1–T57 is disordered. The segment covering P28 to S39 has biased composition (basic and acidic residues). One can recognise a BRCT 1 domain in the interval E58 to M146. Residues K150–R194 form a disordered region. Over residues A161–T183 the composition is skewed to basic and acidic residues. Residues R184–R194 show a composition bias toward polar residues. Residues A240 to D260 are a coiled coil. The region spanning E266 to N347 is the BRCT 2 domain.

In terms of assembly, homodimer. Interacts with polynucleotide kinase (PNK), DNA polymerase-beta (POLB) and DNA ligase III (LIG3). Interacts with ZDP and ROS1. Binds to various forms of double-stranded DNA (e.g. methylated, unmethylated, with single-nucleotide gap flanked by 3'-phosphate or 5'-phosphate ends).

The protein localises to the nucleus. Functionally, corrects defective DNA strand-break repair and sister chromatid exchange following treatment with ionizing radiation and alkylating agents. Involved in DNA demethylation pathway by stimulating cytosine methylation (5-meC) excision, gap tailoring, and DNA ligation. This chain is DNA-repair protein XRCC1, found in Arabidopsis thaliana (Mouse-ear cress).